Reading from the N-terminus, the 268-residue chain is 1D-myo-inositol 2-acetamido-2-deoxy-alpha-D-glucopyranoside deacetylase (268 aa).

The Zn(2+) site is built by His7, Asp10, and His142.

The protein belongs to the MshB deacetylase family. Requires Zn(2+) as cofactor.

It catalyses the reaction 1D-myo-inositol 2-acetamido-2-deoxy-alpha-D-glucopyranoside + H2O = 1D-myo-inositol 2-amino-2-deoxy-alpha-D-glucopyranoside + acetate. Its function is as follows. Catalyzes the deacetylation of 1D-myo-inositol 2-acetamido-2-deoxy-alpha-D-glucopyranoside (GlcNAc-Ins) in the mycothiol biosynthesis pathway. In Saccharomonospora viridis (strain ATCC 15386 / DSM 43017 / JCM 3036 / CCUG 5913 / NBRC 12207 / NCIMB 9602 / P101) (Thermoactinomyces viridis), this protein is 1D-myo-inositol 2-acetamido-2-deoxy-alpha-D-glucopyranoside deacetylase.